The following is a 485-amino-acid chain: Glucose-6-phosphate 1-dehydrogenase (485 aa).

NADP(+) contacts are provided by residues R46, 89 to 90 (DI), and K144. Residues H174, K178, E212, and D231 each contribute to the substrate site. H236 acts as the Proton acceptor in catalysis. K334 is a binding site for substrate.

The protein belongs to the glucose-6-phosphate dehydrogenase family.

The catalysed reaction is D-glucose 6-phosphate + NADP(+) = 6-phospho-D-glucono-1,5-lactone + NADPH + H(+). The protein operates within carbohydrate degradation; pentose phosphate pathway; D-ribulose 5-phosphate from D-glucose 6-phosphate (oxidative stage): step 1/3. Its function is as follows. Catalyzes the oxidation of glucose 6-phosphate to 6-phosphogluconolactone. This is Glucose-6-phosphate 1-dehydrogenase from Zymomonas mobilis subsp. mobilis (strain ATCC 31821 / ZM4 / CP4).